The following is a 49-amino-acid chain: uncharacterized protein (49 aa).

A helical transmembrane segment spans residues 8 to 28 (FFLFSSGVLQATTLLLVILIF).

The protein resides in the cell membrane. This is an uncharacterized protein from Bacillus subtilis (strain 168).